The following is a 778-amino-acid chain: Arf-GAP with coiled-coil, ANK repeat and PH domain-containing protein 2 (778 aa).

The 226-residue stretch at 1 to 226 (MKMTVDFEEC…MKDLGAQLDR (226 aa)) folds into the BAR domain. Residues 266 to 361 (GIVMEGYLFK…WIKAVQTSIA (96 aa)) enclose the PH domain. The tract at residues 371 to 391 (SEKLDKKSSPSTGSLDSGNES) is disordered. Positions 379 to 388 (SPSTGSLDSG) are enriched in polar residues. Phosphoserine is present on residues serine 384 and serine 387. Positions 399–520 (ESALQRVQCI…KFVDKYSISL (122 aa)) constitute an Arf-GAP domain. A C4-type zinc finger spans residues 414-437 (CCDCGLADPRWASINLGITLCIEC). Serine 521 carries the phosphoserine modification. The tract at residues 540–599 (SISKFGPGDQVRASAQSSVRSNDSGIQQSSDDGRESLPSTVSANSLYEPEGERQDSSMFL) is disordered. The span at 552 to 569 (ASAQSSVRSNDSGIQQSS) shows a compositional bias: polar residues. Phosphoserine occurs at positions 581 and 584. ANK repeat units follow at residues 640–669 (NKAT…NVNQ), 673–702 (QGRG…NQHA), and 706–735 (EGKD…NEEM). At tyrosine 742 the chain carries Phosphotyrosine. Serine 775 is subject to Phosphoserine.

In terms of assembly, interacts (via KANK domains) with RAB35 (GTP-bound form); the interaction is direct and probably recruits ACAP2 to membranes including plasma membrane. Interacts with MICALL1; the interaction is indirect through RAB35. Widely expressed. Highest level in lung.

The protein resides in the cell membrane. Its subcellular location is the endosome membrane. GAP activity stimulated by phosphatidylinositol 4,5-bisphosphate (PIP2) and phosphatidic acid. Functionally, GTPase-activating protein (GAP) for ADP ribosylation factor 6 (ARF6). Doesn't show GAP activity for RAB35. The protein is Arf-GAP with coiled-coil, ANK repeat and PH domain-containing protein 2 (ACAP2) of Homo sapiens (Human).